A 150-amino-acid chain; its full sequence is Large ribosomal subunit protein bL9 (150 aa).

Belongs to the bacterial ribosomal protein bL9 family.

Binds to the 23S rRNA. This chain is Large ribosomal subunit protein bL9, found in Photobacterium profundum (strain SS9).